The chain runs to 242 residues: Guanylate kinase (242 aa).

The region spanning 22-200 (GLLIVMTGAS…AVRELQAVQR (179 aa)) is the Guanylate kinase-like domain. 29 to 36 (GASGVGKG) serves as a coordination point for ATP.

It belongs to the guanylate kinase family.

Its subcellular location is the cytoplasm. It carries out the reaction GMP + ATP = GDP + ADP. Essential for recycling GMP and indirectly, cGMP. This Deinococcus geothermalis (strain DSM 11300 / CIP 105573 / AG-3a) protein is Guanylate kinase.